Reading from the N-terminus, the 80-residue chain is Small ribosomal subunit protein uS17 (80 aa).

The protein belongs to the universal ribosomal protein uS17 family. As to quaternary structure, part of the 30S ribosomal subunit.

Its function is as follows. One of the primary rRNA binding proteins, it binds specifically to the 5'-end of 16S ribosomal RNA. This is Small ribosomal subunit protein uS17 from Brucella anthropi (strain ATCC 49188 / DSM 6882 / CCUG 24695 / JCM 21032 / LMG 3331 / NBRC 15819 / NCTC 12168 / Alc 37) (Ochrobactrum anthropi).